Consider the following 783-residue polypeptide: LPS-assembly protein LptD (783 aa).

The N-terminal stretch at 1 to 24 (MKKNYYSLISFSIFTALYSTAGFA) is a signal peptide.

This sequence belongs to the LptD family. Component of the lipopolysaccharide transport and assembly complex. Interacts with LptE and LptA.

The protein localises to the cell outer membrane. Together with LptE, is involved in the assembly of lipopolysaccharide (LPS) at the surface of the outer membrane. The polypeptide is LPS-assembly protein LptD (Mannheimia succiniciproducens (strain KCTC 0769BP / MBEL55E)).